The chain runs to 497 residues: Aldehyde dehydrogenase (497 aa).

Residue 241 to 246 (GSTVVG) coordinates NAD(+). The active-site Proton acceptor is the Glu264. Cys298 serves as the catalytic Nucleophile.

The protein belongs to the aldehyde dehydrogenase family.

The protein resides in the cytoplasm. The catalysed reaction is an aldehyde + NAD(+) + H2O = a carboxylate + NADH + 2 H(+). It participates in alcohol metabolism; ethanol degradation; acetate from ethanol: step 2/2. This is Aldehyde dehydrogenase (ALTA10) from Alternaria alternata (Alternaria rot fungus).